Reading from the N-terminus, the 327-residue chain is AA9 family lytic polysaccharide monooxygenase B (327 aa).

The signal sequence occupies residues Met1–Ala19. 2 residues coordinate Cu(2+): His20 and His98. Cysteines 68 and 192 form a disulfide. Positions 178 and 187 each coordinate O2. Position 189 (Tyr189) interacts with Cu(2+). Low complexity predominate over residues Ser264–Pro280. The disordered stretch occupies residues Ser264–Gly284. The CBM1 domain maps to Cys291–Val327. An N-linked (GlcNAc...) asparagine glycan is attached at Asn317.

This sequence belongs to the polysaccharide monooxygenase AA9 family. Cu(2+) serves as cofactor.

The protein resides in the secreted. The catalysed reaction is [(1-&gt;4)-beta-D-glucosyl]n+m + reduced acceptor + O2 = 4-dehydro-beta-D-glucosyl-[(1-&gt;4)-beta-D-glucosyl]n-1 + [(1-&gt;4)-beta-D-glucosyl]m + acceptor + H2O.. Its function is as follows. Lytic polysaccharide monooxygenase (LPMO) that depolymerizes crystalline and amorphous polysaccharides via the oxidation of scissile alpha- or beta-(1-4)-glycosidic bonds, yielding C1 or C4 oxidation products. Catalysis by LPMOs requires the reduction of the active-site copper from Cu(II) to Cu(I) by a reducing agent and H(2)O(2) or O(2) as a cosubstrate. This Podospora anserina (strain S / ATCC MYA-4624 / DSM 980 / FGSC 10383) (Pleurage anserina) protein is AA9 family lytic polysaccharide monooxygenase B (LPMO9B).